The sequence spans 301 residues: Phosphoribosylaminoimidazole-succinocarboxamide synthase (301 aa).

This sequence belongs to the SAICAR synthetase family.

It catalyses the reaction 5-amino-1-(5-phospho-D-ribosyl)imidazole-4-carboxylate + L-aspartate + ATP = (2S)-2-[5-amino-1-(5-phospho-beta-D-ribosyl)imidazole-4-carboxamido]succinate + ADP + phosphate + 2 H(+). It participates in purine metabolism; IMP biosynthesis via de novo pathway; 5-amino-1-(5-phospho-D-ribosyl)imidazole-4-carboxamide from 5-amino-1-(5-phospho-D-ribosyl)imidazole-4-carboxylate: step 1/2. The chain is Phosphoribosylaminoimidazole-succinocarboxamide synthase (ADE1) from Cyberlindnera jadinii (Torula yeast).